The primary structure comprises 933 residues: Probable Rho-type GTPase-activating protein 4 (933 aa).

LIM zinc-binding domains follow at residues 22–80 (CFCI…LCVD) and 81–129 (ICNG…CLPC). Disordered stretches follow at residues 181–200 (PSSV…NSLR) and 304–338 (ENGT…STTT). The segment covering 325–338 (RSSTMNYKSVSTTT) has biased composition (polar residues). S353 is subject to Phosphoserine. Disordered regions lie at residues 415-435 (RLSS…NYEA), 605-628 (SSSF…SPRE), and 641-660 (GFRP…KRNS). Over residues 619–628 (RTISTPSPRE) the composition is skewed to polar residues. S625 is modified (phosphoserine). Basic and acidic residues predominate over residues 643–652 (RPKDNKDKES). Residues S738 and S740 each carry the phosphoserine modification. A Rho-GAP domain is found at 753 to 932 (NRLTLLRVPT…FLIDHVHEVF (180 aa)).

Its function is as follows. GTPase-activating protein for Rho-type proteins. This Schizosaccharomyces pombe (strain 972 / ATCC 24843) (Fission yeast) protein is Probable Rho-type GTPase-activating protein 4 (rga4).